The sequence spans 434 residues: 4-hydroxy-3-methylbut-2-en-1-yl diphosphate synthase (flavodoxin) (434 aa).

Residues 1 to 15 (MQSEAQSPRSSQICS) show a composition bias toward polar residues. The tract at residues 1 to 24 (MQSEAQSPRSSQICSTEPVFGGHQ) is disordered. [4Fe-4S] cluster contacts are provided by cysteine 322, cysteine 325, cysteine 368, and glutamate 375.

Belongs to the IspG family. The cofactor is [4Fe-4S] cluster.

It carries out the reaction (2E)-4-hydroxy-3-methylbut-2-enyl diphosphate + oxidized [flavodoxin] + H2O + 2 H(+) = 2-C-methyl-D-erythritol 2,4-cyclic diphosphate + reduced [flavodoxin]. It functions in the pathway isoprenoid biosynthesis; isopentenyl diphosphate biosynthesis via DXP pathway; isopentenyl diphosphate from 1-deoxy-D-xylulose 5-phosphate: step 5/6. In terms of biological role, converts 2C-methyl-D-erythritol 2,4-cyclodiphosphate (ME-2,4cPP) into 1-hydroxy-2-methyl-2-(E)-butenyl 4-diphosphate. This is 4-hydroxy-3-methylbut-2-en-1-yl diphosphate synthase (flavodoxin) from Burkholderia ambifaria (strain MC40-6).